We begin with the raw amino-acid sequence, 512 residues long: 2,3-bisphosphoglycerate-independent phosphoglycerate mutase (512 aa).

Mn(2+)-binding residues include D13 and S63. The Phosphoserine intermediate role is filled by S63. Substrate-binding positions include H124, 154-155 (RD), R186, R192, 262-265 (RPDR), and K337. Mn(2+)-binding residues include D404, H408, D445, H446, and H463.

Belongs to the BPG-independent phosphoglycerate mutase family. As to quaternary structure, monomer. Requires Mn(2+) as cofactor.

It catalyses the reaction (2R)-2-phosphoglycerate = (2R)-3-phosphoglycerate. Its pathway is carbohydrate degradation; glycolysis; pyruvate from D-glyceraldehyde 3-phosphate: step 3/5. Functionally, essential for rapid growth and for sporulation. Catalyzes the interconversion of 2-phosphoglycerate and 3-phosphoglycerate. This is 2,3-bisphosphoglycerate-independent phosphoglycerate mutase from Oceanobacillus iheyensis (strain DSM 14371 / CIP 107618 / JCM 11309 / KCTC 3954 / HTE831).